The chain runs to 115 residues: Small polypeptide DEVIL 13 (115 aa).

The span at 1 to 12 shows a compositional bias: basic and acidic residues; sequence MEEKWKLSKKDT. The disordered stretch occupies residues 1-89; sequence MEEKWKLSKK…SITQKYSSLA (89 aa). Over residues 13 to 65 the composition is skewed to low complexity; the sequence is TASSSSSKSKFSRSFSTSASSTKSPIFVRSSSTKCSVPSSSSSSSSSSSISRS. Residues 44 to 63 form a helical membrane-spanning segment; that stretch reads STKCSVPSSSSSSSSSSSIS. The tract at residues 80-111 is required for DVL/RTFL small polypeptide activity; sequence SITQKYSSLAKEQKARFYIMRRCVAMLVCWHK.

It belongs to the DVL/RTFL small polypeptides family.

It localises to the cell membrane. Functionally, small polypeptide acting as a regulatory molecule which coordinates cellular responses required for differentiation, growth and development, probably by restricting polar cell proliferation in lateral organs and coordinating socket cell recruitment and differentiation at trichome sites. This chain is Small polypeptide DEVIL 13, found in Arabidopsis thaliana (Mouse-ear cress).